Consider the following 188-residue polypeptide: UPF0301 protein Tcr_1827 (188 aa).

It belongs to the UPF0301 (AlgH) family.

This Hydrogenovibrio crunogenus (strain DSM 25203 / XCL-2) (Thiomicrospira crunogena) protein is UPF0301 protein Tcr_1827.